The sequence spans 276 residues: Large ribosomal subunit protein uL2 (276 aa).

Disordered stretches follow at residues 36–55 (PLPR…RHRG) and 219–276 (TVRG…GRKK). Residues 255-276 (LGKKTRKKKNRSNKLIVRGRKK) show a composition bias toward basic residues.

Belongs to the universal ribosomal protein uL2 family. As to quaternary structure, part of the 50S ribosomal subunit. Forms a bridge to the 30S subunit in the 70S ribosome.

Functionally, one of the primary rRNA binding proteins. Required for association of the 30S and 50S subunits to form the 70S ribosome, for tRNA binding and peptide bond formation. It has been suggested to have peptidyltransferase activity; this is somewhat controversial. Makes several contacts with the 16S rRNA in the 70S ribosome. In Macrococcus caseolyticus (strain JCSC5402) (Macrococcoides caseolyticum), this protein is Large ribosomal subunit protein uL2.